Consider the following 181-residue polypeptide: U1 small nuclear ribonucleoprotein C (181 aa).

Residues 2–34 (PKCDYCDVYLTHDSMSVRKAHNSGRNHLRNVVD) form a Matrin-type zinc finger. 2 stretches are compositionally biased toward pro residues: residues 129-143 (PGMPAGMPFPPPGGL) and 150-174 (PIPPPGGFPGMPPPGQGFPGMPPPG). Positions 129-181 (PGMPAGMPFPPPGGLPPNFQFPIPPPGGFPGMPPPGQGFPGMPPPGGNHDERR) are disordered.

The protein belongs to the U1 small nuclear ribonucleoprotein C family. U1 snRNP is composed of the 7 core Sm proteins B/B', D1, D2, D3, E, F and G that assemble in a heptameric protein ring on the Sm site of the small nuclear RNA to form the core snRNP, and at least 3 U1 snRNP-specific proteins U1-70K, U1-A and U1-C. U1-C interacts with U1 snRNA and the 5' splice-site region of the pre-mRNA.

It is found in the nucleus. In terms of biological role, component of the spliceosomal U1 snRNP, which is essential for recognition of the pre-mRNA 5' splice-site and the subsequent assembly of the spliceosome. U1-C is directly involved in initial 5' splice-site recognition for both constitutive and regulated alternative splicing. The interaction with the 5' splice-site seems to precede base-pairing between the pre-mRNA and the U1 snRNA. Stimulates commitment or early (E) complex formation by stabilizing the base pairing of the 5' end of the U1 snRNA and the 5' splice-site region. The chain is U1 small nuclear ribonucleoprotein C from Sclerotinia sclerotiorum (strain ATCC 18683 / 1980 / Ss-1) (White mold).